We begin with the raw amino-acid sequence, 887 residues long: Centrobin (887 aa).

Residues Met-1 to Val-34 form a disordered region. Phosphoserine is present on Ser-81. Disordered regions lie at residues Met-110 to Ser-153, Ser-465 to Gln-486, Thr-566 to Glu-591, and Leu-636 to Ala-695. Residues Thr-113–Glu-128 show a composition bias toward basic and acidic residues. Residues Ser-133 to Ser-153 are compositionally biased toward polar residues. Residues Arg-191–Glu-557 are a coiled coil. The segment at Gln-360–Arg-887 is required for centrosome localization. Basic and acidic residues predominate over residues Thr-670 to Pro-680. At Ser-782 the chain carries Phosphoserine. Residues Gly-824–Arg-887 form a disordered region. Over residues Val-832–Ile-849 the composition is skewed to basic and acidic residues.

In terms of assembly, interacts with LYST.

The protein localises to the cytoplasm. It is found in the cytoskeleton. Its subcellular location is the microtubule organizing center. It localises to the centrosome. The protein resides in the centriole. Functionally, required for centriole duplication. Inhibition of centriole duplication leading to defects in cytokinesis. This chain is Centrobin (Cntrob), found in Mus musculus (Mouse).